The chain runs to 596 residues: Elongation factor 4 (596 aa).

The tr-type G domain occupies 2–184 (KHIRNFSIIA…VIVAKIPPPE (183 aa)). Residues 14–19 (DHGKST) and 131–134 (NKID) contribute to the GTP site.

The protein belongs to the TRAFAC class translation factor GTPase superfamily. Classic translation factor GTPase family. LepA subfamily.

The protein localises to the cell inner membrane. It carries out the reaction GTP + H2O = GDP + phosphate + H(+). In terms of biological role, required for accurate and efficient protein synthesis under certain stress conditions. May act as a fidelity factor of the translation reaction, by catalyzing a one-codon backward translocation of tRNAs on improperly translocated ribosomes. Back-translocation proceeds from a post-translocation (POST) complex to a pre-translocation (PRE) complex, thus giving elongation factor G a second chance to translocate the tRNAs correctly. Binds to ribosomes in a GTP-dependent manner. This Shewanella sp. (strain W3-18-1) protein is Elongation factor 4.